A 405-amino-acid polypeptide reads, in one-letter code: Arginine deiminase (405 aa).

The Amidino-cysteine intermediate role is filled by Cys395.

Belongs to the arginine deiminase family.

It localises to the cytoplasm. The catalysed reaction is L-arginine + H2O = L-citrulline + NH4(+). The protein operates within amino-acid degradation; L-arginine degradation via ADI pathway; carbamoyl phosphate from L-arginine: step 1/2. The chain is Arginine deiminase from Rhodococcus opacus (strain B4).